A 491-amino-acid chain; its full sequence is Proline-rich protein PRCC (491 aa).

Positions 1 to 100 (MSLVAYASSD…PPPPGVSPAE (100 aa)) are mediates interaction with MAD2L2. 3 disordered regions span residues 1–244 (MSLV…SPSA), 260–313 (ITQE…PAFQ), and 432–454 (EEKTMKSFSKKKGEQPTGQQRRK). A compositionally biased stretch (acidic residues) spans 10–26 (DESEPDEAEPEPEEEEA). The span at 40 to 49 (ASLPAPKGPA) shows a compositional bias: low complexity. Positions 50–96 (LLPPPPQMLAPAFPPPLLLPPPTGDPRLQPPPPLPFGLGGFPPPPGV) are enriched in pro residues. Phosphoserine occurs at positions 97, 114, 157, 159, 212, and 218. Residues 111-120 (GLPSPRGPGL) show a composition bias toward low complexity. Residues 230 to 244 (APVVGTTTTTPSPSA) show a composition bias toward low complexity. Threonine 239 carries the post-translational modification Phosphothreonine. A phosphoserine mark is found at serine 241 and serine 267. The segment covering 262–272 (QEEDDSDEEVA) has biased composition (acidic residues). Residues 287–307 (GVEPYPYPIPTVPEELPPGTE) are compositionally biased toward pro residues.

In terms of assembly, interacts with MAD2L2; the interaction is direct. In terms of tissue distribution, ubiquitous in fetal and adult tissues.

Its subcellular location is the nucleus. In terms of biological role, may regulate cell cycle progression through interaction with MAD2L2. This is Proline-rich protein PRCC (PRCC) from Homo sapiens (Human).